The primary structure comprises 478 residues: Solute carrier family 7 member 13 (478 aa).

The Cytoplasmic portion of the chain corresponds to 1-14 (MAMDSKKEIRLKRE). Residues 15 to 35 (LGYFWGTNFLIINIIGAGIFV) traverse the membrane as a helical segment. Residues 36 to 47 (SPKGVLQHSSMN) are Extracellular-facing. The helical transmembrane segment at 48–68 (VGVSLCVWAVCAVLTLTSALC) threads the bilayer. Residues 69-89 (SAEIGITFPYSGAHYYFLKRC) lie on the Cytoplasmic side of the membrane. A helical transmembrane segment spans residues 90–110 (FGPLVAFLRLWTSLFLGPGLI). The Extracellular segment spans residues 111–129 (ASQALLLAEYGVQPFYPSC). A helical membrane pass occupies residues 130 to 150 (SAPILPRKCLALAMLWIVGIL). The Cytoplasmic segment spans residues 151-163 (NSRGVKELSWLQT). A helical transmembrane segment spans residues 164–184 (VSSVLKVGILGVISLSGLFLL). Topologically, residues 185–208 (VRGKKENVQRLQNAFDAEFPEVSQ) are extracellular. Residues 209–229 (LIEAIFQGYFAFSGGGCFTCI) traverse the membrane as a helical segment. At 230-242 (AGELKKPSKTIPR) the chain is on the cytoplasmic side. Residues 243–263 (CIFTGLPLVTVVYLLANISYL) traverse the membrane as a helical segment. Residues 264–288 (TVLTPQEMLSSDAVALTWTDRVIPQ) lie on the Extracellular side of the membrane. The helical transmembrane segment at 289–309 (FTWTVPFAISASLFINLVINV) threads the bilayer. Residues 310 to 338 (LETSRVLYIASENGQLPLLFCALNVHSSP) lie on the Cytoplasmic side of the membrane. A helical membrane pass occupies residues 339–359 (FIAVLLIISMASILIVLTNLI). Position 360 (Asp-360) is a topological domain, extracellular. Residues 361–381 (LINYLYFVVSIWTALSIIGIL) traverse the membrane as a helical segment. Over 382 to 395 (KLRYQEPNLHRPYK) the chain is Cytoplasmic. The chain crosses the membrane as a helical span at residues 396–416 (VFLPFTFIALGITLSLVLIPL). The Extracellular segment spans residues 417 to 423 (VKSPKLH). A helical membrane pass occupies residues 424–444 (YIYVFLFLLSGLVFYVPLIHF). At 445–478 (KVKFVWFQKLTCYLQLLFNICIPDVSDDHIHEES) the chain is on the cytoplasmic side.

It belongs to the amino acid-polyamine-organocation (APC) superfamily. In terms of assembly, disulfide-linked heterodimer composed of the catalytic light subunit SLC7A13 and the heavy subunit SLC3A1. Expressed in renal tubules in the outer stripe of the outer medulla and medullary ray (at protein level). Detected in male but not in female kidney.

The protein localises to the apical cell membrane. The catalysed reaction is L-cystine(out) + L-aspartate(in) = L-cystine(in) + L-aspartate(out). The enzyme catalyses L-cystine(out) = L-cystine(in). It carries out the reaction L-aspartate(in) + L-glutamate(out) = L-aspartate(out) + L-glutamate(in). It catalyses the reaction L-aspartate(in) + L-glutamine(out) = L-aspartate(out) + L-glutamine(in). The catalysed reaction is L-aspartate(in) + L-methionine(out) = L-aspartate(out) + L-methionine(in). The enzyme catalyses L-leucine(out) + L-aspartate(in) = L-leucine(in) + L-aspartate(out). It carries out the reaction L-valine(out) + L-aspartate(in) = L-valine(in) + L-aspartate(out). It catalyses the reaction L-aspartate(in) + L-phenylalanine(out) = L-aspartate(out) + L-phenylalanine(in). The catalysed reaction is L-tyrosine(out) + L-aspartate(in) = L-tyrosine(in) + L-aspartate(out). The enzyme catalyses L-tryptophan(out) + L-aspartate(in) = L-tryptophan(in) + L-aspartate(out). Associates with SLC3A1/rBAT to form a functional heterodimeric complex that transports anionic and neutral amino acids across the apical plasma membrane of renal epithelium. Preferentially mediates exchange transport, but can also operate via facilitated diffusion. May act as a major transporter for L-cystine in late proximal tubules, ensuring its reabsorption from the luminal fluid in exchange for cytosolic L-glutamate or L-aspartate. This Mus musculus (Mouse) protein is Solute carrier family 7 member 13.